A 238-amino-acid chain; its full sequence is Probable transcriptional regulatory protein VIBHAR_07036 (238 aa).

It belongs to the TACO1 family.

Its subcellular location is the cytoplasm. The chain is Probable transcriptional regulatory protein VIBHAR_07036 from Vibrio campbellii (strain ATCC BAA-1116).